The following is a 231-amino-acid chain: Thiamine import ATP-binding protein ThiQ (231 aa).

Residues 2-230 enclose the ABC transporter domain; the sequence is LHLDRLLIRQ…PPPALRAYLG (229 aa). ATP is bound at residue 32–39; sequence GPSGGGKS.

The protein belongs to the ABC transporter superfamily. Thiamine importer (TC 3.A.1.19.1) family. The complex is composed of two ATP-binding proteins (ThiQ), two transmembrane proteins (ThiP) and a solute-binding protein (ThiB).

The protein resides in the cell inner membrane. The enzyme catalyses thiamine(out) + ATP + H2O = thiamine(in) + ADP + phosphate + H(+). In terms of biological role, part of the ABC transporter complex ThiBPQ involved in thiamine import. Responsible for energy coupling to the transport system. This chain is Thiamine import ATP-binding protein ThiQ, found in Cereibacter sphaeroides (strain ATCC 17023 / DSM 158 / JCM 6121 / CCUG 31486 / LMG 2827 / NBRC 12203 / NCIMB 8253 / ATH 2.4.1.) (Rhodobacter sphaeroides).